We begin with the raw amino-acid sequence, 378 residues long: D-alanine--D-alanine ligase (378 aa).

The 226-residue stretch at 149-374 (KVLLRAAGIP…FRTVVTDLIE (226 aa)) folds into the ATP-grasp domain. 189 to 247 (EAGLQYPLFVKPSRAGSSFGVTKVEQIGDAAALAAAVFEASRHDWRVLVEQGIDAREIE) contacts ATP. Mg(2+) contacts are provided by D328, E341, and N343.

Belongs to the D-alanine--D-alanine ligase family. It depends on Mg(2+) as a cofactor. The cofactor is Mn(2+).

The protein localises to the cytoplasm. It catalyses the reaction 2 D-alanine + ATP = D-alanyl-D-alanine + ADP + phosphate + H(+). It functions in the pathway cell wall biogenesis; peptidoglycan biosynthesis. In terms of biological role, cell wall formation. The protein is D-alanine--D-alanine ligase of Bifidobacterium animalis subsp. lactis (strain AD011).